A 276-amino-acid polypeptide reads, in one-letter code: Ubiquinone biosynthesis protein coq11, mitochondrial (276 aa).

Belongs to the NAD(P)-dependent epimerase/dehydratase family.

The protein resides in the mitochondrion. Functionally, acts in the coenzyme Q biosynthetic pathway. The chain is Ubiquinone biosynthesis protein coq11, mitochondrial from Schizosaccharomyces pombe (strain 972 / ATCC 24843) (Fission yeast).